A 163-amino-acid chain; its full sequence is Probable chemoreceptor glutamine deamidase CheD (163 aa).

Belongs to the CheD family.

It carries out the reaction L-glutaminyl-[protein] + H2O = L-glutamyl-[protein] + NH4(+). Its function is as follows. Probably deamidates glutamine residues to glutamate on methyl-accepting chemotaxis receptors (MCPs), playing an important role in chemotaxis. This chain is Probable chemoreceptor glutamine deamidase CheD, found in Borreliella burgdorferi (strain ATCC 35210 / DSM 4680 / CIP 102532 / B31) (Borrelia burgdorferi).